A 176-amino-acid chain; its full sequence is Endoribonuclease YbeY (176 aa).

Residues His-139, His-143, and His-149 each coordinate Zn(2+).

The protein belongs to the endoribonuclease YbeY family. Zn(2+) serves as cofactor.

The protein resides in the cytoplasm. Functionally, single strand-specific metallo-endoribonuclease involved in late-stage 70S ribosome quality control and in maturation of the 3' terminus of the 16S rRNA. The polypeptide is Endoribonuclease YbeY (Acaryochloris marina (strain MBIC 11017)).